The following is a 256-amino-acid chain: Astacin-like metalloprotease toxin 2 (256 aa).

Residues 1–24 (MIPDVGFLVLLTGALFICIKAAPA) form the signal peptide. Positions 25–52 (TTDVDPTFEGRIVMEGDILIREEQLTER) are excised as a propeptide. In terms of domain architecture, Peptidase M12A spans 53-250 (NAIALENMRW…KKINTLYNCP (198 aa)). Cystine bridges form between Cys-94–Cys-249 and Cys-117–Cys-136. Residue His-144 participates in Zn(2+) binding. Glu-145 is an active-site residue. Zn(2+)-binding residues include His-148 and His-154.

In terms of assembly, monomer. Zn(2+) is required as a cofactor. As to expression, expressed by the venom gland.

The protein resides in the secreted. With respect to regulation, inhibited by 1,10-phenanthroline. Its function is as follows. Zinc metalloprotease. Provoques deadhesion of endothelial cells from cell cultures, and also degradation of fibronectin, fibrinogen and gelatin in vitro. Its role in the venom is not fully understood but it might act as a spreading factor that facilitates diffusion of other venom toxins. Alternatively, it might be involved in the proteolytic processing of other venom toxins or it might play a role in extra-oral digestion of prey. This Loxosceles intermedia (Brown spider) protein is Astacin-like metalloprotease toxin 2.